A 322-amino-acid chain; its full sequence is uncharacterized protein (322 aa).

This is an uncharacterized protein from Acanthamoeba polyphaga (Amoeba).